The sequence spans 120 residues: MIPGEYVLSDTPILCNRGREAIEIEVINTGDRPVQIGSHYHFAEVNPLVTFDRVRARGMRLDIPAGTAARLEPGDATTVRLIPFAGGRLIRGFRNEINGAVESCMVSGASEPASGTGETS.

The protein belongs to the urease beta subunit family. Heterotrimer of UreA (gamma), UreB (beta) and UreC (alpha) subunits. Three heterotrimers associate to form the active enzyme.

Its subcellular location is the cytoplasm. It catalyses the reaction urea + 2 H2O + H(+) = hydrogencarbonate + 2 NH4(+). It functions in the pathway nitrogen metabolism; urea degradation; CO(2) and NH(3) from urea (urease route): step 1/1. The protein is Urease subunit beta of Corynebacterium efficiens (strain DSM 44549 / YS-314 / AJ 12310 / JCM 11189 / NBRC 100395).